We begin with the raw amino-acid sequence, 261 residues long: Malonyl-[acyl-carrier protein] O-methyltransferase (261 aa).

The protein belongs to the methyltransferase superfamily.

The catalysed reaction is malonyl-[ACP] + S-adenosyl-L-methionine = malonyl-[ACP] methyl ester + S-adenosyl-L-homocysteine. Its pathway is cofactor biosynthesis; biotin biosynthesis. Its function is as follows. Converts the free carboxyl group of a malonyl-thioester to its methyl ester by transfer of a methyl group from S-adenosyl-L-methionine (SAM). It allows to synthesize pimeloyl-ACP via the fatty acid synthetic pathway. The sequence is that of Malonyl-[acyl-carrier protein] O-methyltransferase from Bacteroides thetaiotaomicron (strain ATCC 29148 / DSM 2079 / JCM 5827 / CCUG 10774 / NCTC 10582 / VPI-5482 / E50).